The sequence spans 456 residues: tRNA-2-methylthio-N(6)-dimethylallyladenosine synthase (456 aa).

The region spanning 13–129 (RYLYVRTFGC…IASLLEEVER (117 aa)) is the MTTase N-terminal domain. The [4Fe-4S] cluster site is built by cysteine 22, cysteine 58, cysteine 92, cysteine 168, cysteine 172, and cysteine 175. Residues 154 to 384 (GTGDVVAQVT…QSIQADITLQ (231 aa)) form the Radical SAM core domain. Residues 387–450 (LAETGTVREV…SHSLKGELLS (64 aa)) form the TRAM domain.

The protein belongs to the methylthiotransferase family. MiaB subfamily. In terms of assembly, monomer. Requires [4Fe-4S] cluster as cofactor.

It is found in the cytoplasm. The enzyme catalyses N(6)-dimethylallyladenosine(37) in tRNA + (sulfur carrier)-SH + AH2 + 2 S-adenosyl-L-methionine = 2-methylsulfanyl-N(6)-dimethylallyladenosine(37) in tRNA + (sulfur carrier)-H + 5'-deoxyadenosine + L-methionine + A + S-adenosyl-L-homocysteine + 2 H(+). In terms of biological role, catalyzes the methylthiolation of N6-(dimethylallyl)adenosine (i(6)A), leading to the formation of 2-methylthio-N6-(dimethylallyl)adenosine (ms(2)i(6)A) at position 37 in tRNAs that read codons beginning with uridine. The protein is tRNA-2-methylthio-N(6)-dimethylallyladenosine synthase of Syntrophobacter fumaroxidans (strain DSM 10017 / MPOB).